The primary structure comprises 399 residues: 4-hydroxyphenylpyruvate dioxygenase (399 aa).

2 VOC domains span residues 23-166 and 197-355; these read GYDH…LIER and RIDH…LFTK. Residues His-200, His-283, and Glu-366 each coordinate Fe cation.

The protein belongs to the 4HPPD family. Requires Fe cation as cofactor.

The catalysed reaction is 3-(4-hydroxyphenyl)pyruvate + O2 = homogentisate + CO2. It functions in the pathway amino-acid degradation; L-phenylalanine degradation; acetoacetate and fumarate from L-phenylalanine: step 3/6. In Coccidioides posadasii (strain C735) (Valley fever fungus), this protein is 4-hydroxyphenylpyruvate dioxygenase (TCRP).